Consider the following 130-residue polypeptide: Small ribosomal subunit protein uS8A (130 aa).

The protein belongs to the universal ribosomal protein uS8 family. As to quaternary structure, component of the small ribosomal subunit (SSU). Mature yeast ribosomes consist of a small (40S) and a large (60S) subunit. The 40S small subunit contains 1 molecule of ribosomal RNA (18S rRNA) and 33 different proteins (encoded by 57 genes). The large 60S subunit contains 3 rRNA molecules (25S, 5.8S and 5S rRNA) and 46 different proteins (encoded by 81 genes).

It localises to the cytoplasm. In terms of biological role, component of the ribosome, a large ribonucleoprotein complex responsible for the synthesis of proteins in the cell. The small ribosomal subunit (SSU) binds messenger RNAs (mRNAs) and translates the encoded message by selecting cognate aminoacyl-transfer RNA (tRNA) molecules. The large subunit (LSU) contains the ribosomal catalytic site termed the peptidyl transferase center (PTC), which catalyzes the formation of peptide bonds, thereby polymerizing the amino acids delivered by tRNAs into a polypeptide chain. The nascent polypeptides leave the ribosome through a tunnel in the LSU and interact with protein factors that function in enzymatic processing, targeting, and the membrane insertion of nascent chains at the exit of the ribosomal tunnel. The polypeptide is Small ribosomal subunit protein uS8A (Saccharomyces cerevisiae (strain ATCC 204508 / S288c) (Baker's yeast)).